The primary structure comprises 219 residues: Cytochrome b6 (219 aa).

The chain crosses the membrane as a helical span at residues 32–52; sequence IFYCFGGIVLTAFIFQGASGF. Cysteine 35 lines the heme c pocket. Heme b-binding residues include histidine 86 and histidine 100. 3 consecutive transmembrane segments (helical) span residues 90–110, 116–136, and 190–210; these read SGCMVLVLILHISRVYLTGGF, LTWISGVILAVVTVSFGVTGY, and IHTFVLPLVTLVLLIVHFSLL. Residues histidine 191 and histidine 206 each coordinate heme b.

The protein belongs to the cytochrome b family. PetB subfamily. The 4 large subunits of the cytochrome b6-f complex are cytochrome b6, subunit IV (17 kDa polypeptide, PetD), cytochrome f and the Rieske protein, while the 4 small subunits are PetG, PetL, PetM and PetN. The complex functions as a dimer. Heme b serves as cofactor. Requires heme c as cofactor.

It is found in the plastid. The protein localises to the chloroplast thylakoid membrane. Component of the cytochrome b6-f complex, which mediates electron transfer between photosystem II (PSII) and photosystem I (PSI), cyclic electron flow around PSI, and state transitions. The polypeptide is Cytochrome b6 (Heterocapsa triquetra (Dinoflagellate)).